Consider the following 206-residue polypeptide: Protein Nef (206 aa).

The disordered stretch occupies residues 1 to 46; it reads MGNKWSKCSTVGRPAIRERMRRAPAAEGVGPASQDSDKYGALTSSS. Gly2 carries the N-myristoyl glycine; by host lipid modification. Residue Ser6 is modified to Phosphoserine; by host. Residues 61 to 65 are acidic; interacts with host PACS1 and PACS2; stabilizes the interaction of NEF/MHC-I with host AP1M1; necessary for MHC-I internalization; sequence QEEEE. The tract at residues 69–78 is SH3-binding; interaction with Src family tyrosine kinases; that stretch reads PVRPQVPLRP. The short motif at 72 to 75 is the PxxP; stabilizes the interaction of NEF/MHC-I with host AP1M1; necessary for MHC-I internalization element; that stretch reads PQVP. The mediates dimerization, Nef-PTE1 interaction stretch occupies residues 108 to 124; that stretch reads DILDLWVYNTQGYFPDW. The segment at 148 to 180 is binding to ATP6V1H; the sequence is VDPREVEEANTGENNSLLHPMSLHGMEDSHREV. Positions 164 to 165 match the Dileucine internalization motif; necessary for CD4 internalization motif; sequence LL. The Diacidic; necessary for CD4 internalization signature appears at 174 to 175; it reads ED.

This sequence belongs to the lentivirus primate group Nef protein family. As to quaternary structure, monomer; cytosolic form. Homodimer; membrane bound form. Interacts with Nef associated p21-activated kinase (PAK2); this interaction activates PAK2. Associates with the Nef-MHC-I-AP1 complex; this complex is required for MHC-I internalization. Interacts (via C-terminus) with host PI3-kinase. Interacts with host PACS1; this interaction seems to be weak. Interacts with host PACS2. Interacts with host LCK and MAPK3; these interactions inhibit the kinase activity of the latter. Interacts with host ATP6V1H; this interaction may play a role in CD4 endocytosis. Associates with the CD4-Nef-AP2 complex; this complex is required for CD4 internalization. Interacts with host AP2 subunit alpha and AP2 subunit sigma2. Interacts with TCR-zeta chain; this interaction up-regulates the Fas ligand (FasL) surface expression. Interacts with host HCK, LYN, and SRC; these interactions activate the Src family kinases. Interacts with MAP3K5; this interaction inhibits the Fas and TNFR-mediated death signals. Interacts with beta-COP and PTE1. Interacts with human RACK1; this increases Nef phosphorylation by PKC. Interacts with TP53; this interaction decreases the half-life of TP53, protecting the infected cell against p53-mediated apoptosis. Post-translationally, the virion-associated Nef proteins are cleaved by the viral protease to release the soluble C-terminal core protein. Nef is probably cleaved concomitantly with viral structural proteins on maturation of virus particles. In terms of processing, myristoylated. Phosphorylated on serine residues, probably by host PKCdelta and theta.

It localises to the host cell membrane. The protein resides in the virion. Its subcellular location is the secreted. It is found in the host Golgi apparatus membrane. Its function is as follows. Factor of infectivity and pathogenicity, required for optimal virus replication. Alters numerous pathways of T-lymphocyte function and down-regulates immunity surface molecules in order to evade host defense and increase viral infectivity. Alters the functionality of other immunity cells, like dendritic cells, monocytes/macrophages and NK cells. In terms of biological role, in infected CD4(+) T-lymphocytes, down-regulates the surface MHC-I, mature MHC-II, CD4, CD28, CCR5 and CXCR4 molecules. Mediates internalization and degradation of host CD4 through the interaction of with the cytoplasmic tail of CD4, the recruitment of AP-2 (clathrin adapter protein complex 2), internalization through clathrin coated pits, and subsequent transport to endosomes and lysosomes for degradation. Diverts host MHC-I molecules to the trans-Golgi network-associated endosomal compartments by an endocytic pathway to finally target them for degradation. MHC-I down-regulation may involve AP-1 (clathrin adapter protein complex 1) or possibly Src family kinase-ZAP70/Syk-PI3K cascade recruited by PACS2. In consequence infected cells are masked for immune recognition by cytotoxic T-lymphocytes. Decreasing the number of immune receptors also prevents reinfection by more HIV particles (superinfection). Down-regulates host SERINC3 and SERINC5 thereby excluding these proteins from the viral particles. Virion infectivity is drastically higher when SERINC3 or SERINC5 are excluded from the viral envelope, because these host antiviral proteins impair the membrane fusion event necessary for subsequent virion penetration. Functionally, bypasses host T-cell signaling by inducing a transcriptional program nearly identical to that of anti-CD3 cell activation. Interaction with TCR-zeta chain up-regulates the Fas ligand (FasL). Increasing surface FasL molecules and decreasing surface MHC-I molecules on infected CD4(+) cells send attacking cytotoxic CD8+ T-lymphocytes into apoptosis. Plays a role in optimizing the host cell environment for viral replication without causing cell death by apoptosis. Protects the infected cells from apoptosis in order to keep them alive until the next virus generation is ready to strike. Inhibits the Fas and TNFR-mediated death signals by blocking MAP3K5/ASK1. Decreases the half-life of TP53, protecting the infected cell against p53-mediated apoptosis. Inhibits the apoptotic signals regulated by the Bcl-2 family proteins through the formation of a Nef/PI3-kinase/PAK2 complex that leads to activation of PAK2 and induces phosphorylation of host BAD. Its function is as follows. Extracellular Nef protein targets CD4(+) T-lymphocytes for apoptosis by interacting with CXCR4 surface receptors. This Human immunodeficiency virus type 1 group M subtype C (isolate 92BR025) (HIV-1) protein is Protein Nef.